Consider the following 178-residue polypeptide: Protein Vhl (178 aa).

This sequence belongs to the VHL family. Part of a complex with Cul2, Roc1a/Rbx1 and the elongin BC complex. Interacts with sima/Hif1a. Interacts with itself. Interacts with mgr and betaTub56D/tubulin beta-1 chain. Interacts with tubulin alpha-beta heterodimers by itself or in complex with mgr. Interacts with microtubules (MTs).

The protein operates within protein modification; protein ubiquitination. Its function is as follows. Involved in development of tracheal vasculature. Probably involved in halting cell migration at the end of vascular tube outgrowth. Possesses E3 ubiquitin ligase activity when in complex with Elongin BC complex, Cul2 and Rox1a/Rbx1, and can target sima/Hif1a for ubiquitination. May play a critical role in promoting microtubule stabilization when tubulins are correctly folded by the prefoldin complex. If tubulin is incorrectly folded, may promote its degradation. The sequence is that of Protein Vhl from Drosophila melanogaster (Fruit fly).